The sequence spans 227 residues: Small ribosomal subunit protein uS3 (227 aa).

Residues 39–108 (IRKFVEERYK…DVTVNVDEVK (70 aa)) form the KH type-2 domain.

This sequence belongs to the universal ribosomal protein uS3 family. In terms of assembly, part of the 30S ribosomal subunit. Forms a tight complex with proteins S10 and S14.

Its function is as follows. Binds the lower part of the 30S subunit head. Binds mRNA in the 70S ribosome, positioning it for translation. This Persephonella marina (strain DSM 14350 / EX-H1) protein is Small ribosomal subunit protein uS3.